The primary structure comprises 90 residues: UPF0237 protein MMP0657 (90 aa).

Residues 5 to 79 (VITVVGVDKP…SEIGVKINVQ (75 aa)) form the ACT domain.

It belongs to the UPF0237 family.

The sequence is that of UPF0237 protein MMP0657 from Methanococcus maripaludis (strain DSM 14266 / JCM 13030 / NBRC 101832 / S2 / LL).